Reading from the N-terminus, the 376-residue chain is Sterol 24-C-methyltransferase (376 aa).

This sequence belongs to the class I-like SAM-binding methyltransferase superfamily. Erg6/SMT family.

The catalysed reaction is zymosterol + S-adenosyl-L-methionine = fecosterol + S-adenosyl-L-homocysteine + H(+). It functions in the pathway steroid metabolism; ergosterol biosynthesis; ergosterol from zymosterol: step 1/5. With respect to regulation, substrate analogs 25-azalanosterol and 24(R,S),25-epiminolanosterol act as inhibitors. Functionally, sterol 24-C-methyltransferase; part of the third module of ergosterol biosynthesis pathway that includes the late steps of the pathway. ERG6 catalyzes the methyl transfer from S-adenosyl-methionine to the C-24 of zymosterol to form fecosterol. The third module or late pathway involves the ergosterol synthesis itself through consecutive reactions that mainly occur in the endoplasmic reticulum (ER) membrane. Firstly, the squalene synthase ERG9 catalyzes the condensation of 2 farnesyl pyrophosphate moieties to form squalene, which is the precursor of all steroids. Squalene synthase is crucial for balancing the incorporation of farnesyl diphosphate (FPP) into sterol and nonsterol isoprene synthesis. Secondly, the squalene epoxidase ERG1 catalyzes the stereospecific oxidation of squalene to (S)-2,3-epoxysqualene, which is considered to be a rate-limiting enzyme in steroid biosynthesis. Then, the lanosterol synthase ERG7 catalyzes the cyclization of (S)-2,3 oxidosqualene to lanosterol, a reaction that forms the sterol core. In the next steps, lanosterol is transformed to zymosterol through a complex process involving various demethylation, reduction and desaturation reactions. The lanosterol 14-alpha-demethylase ERG11 (also known as CYP51) catalyzes C14-demethylation of lanosterol to produce 4,4'-dimethyl cholesta-8,14,24-triene-3-beta-ol, which is critical for ergosterol biosynthesis. The C-14 reductase ERG24 reduces the C14=C15 double bond of 4,4-dimethyl-cholesta-8,14,24-trienol to produce 4,4-dimethyl-cholesta-8,24-dienol. 4,4-dimethyl-cholesta-8,24-dienol is substrate of the C-4 demethylation complex ERG25-ERG26-ERG27 in which ERG25 catalyzes the three-step monooxygenation required for the demethylation of 4,4-dimethyl and 4alpha-methylsterols, ERG26 catalyzes the oxidative decarboxylation that results in a reduction of the 3-beta-hydroxy group at the C-3 carbon to an oxo group, and ERG27 is responsible for the reduction of the keto group on the C-3. ERG28 has a role as a scaffold to help anchor ERG25, ERG26 and ERG27 to the endoplasmic reticulum and ERG29 regulates the activity of the iron-containing C4-methylsterol oxidase ERG25. Then, the sterol 24-C-methyltransferase ERG6 catalyzes the methyl transfer from S-adenosyl-methionine to the C-24 of zymosterol to form fecosterol. The C-8 sterol isomerase ERG2 catalyzes the reaction which results in unsaturation at C-7 in the B ring of sterols and thus converts fecosterol to episterol. The sterol-C5-desaturase ERG3 then catalyzes the introduction of a C-5 double bond in the B ring to produce 5-dehydroepisterol. The C-22 sterol desaturase ERG5 further converts 5-dehydroepisterol into ergosta-5,7,22,24(28)-tetraen-3beta-ol by forming the C-22(23) double bond in the sterol side chain. Finally, ergosta-5,7,22,24(28)-tetraen-3beta-ol is substrate of the C-24(28) sterol reductase ERG4 to produce ergosterol. The polypeptide is Sterol 24-C-methyltransferase (Candida albicans (strain SC5314 / ATCC MYA-2876) (Yeast)).